The primary structure comprises 100 residues: MAAMNTDAAVLAKEAANFERISGELKGVIAQVESTGSALAAQMVGQAGTAAQAALARFHEAAAKQVQELNEISANIHTSGTQYTSTDEDQAGTLASSMNI.

The disordered stretch occupies residues Gly-80–Ile-100.

It belongs to the WXG100 family. CFP-10 subfamily. Forms a tight 1:1 complex with EsxA. An artificial EsxA-EsxB heterodimer interacts with EspA.

The protein localises to the secreted. Functionally, an exported protein. Plays a role in DNA conjugation, in at least a donor strain. The polypeptide is ESAT-6-like protein EsxB (Mycolicibacterium smegmatis (strain ATCC 700084 / mc(2)155) (Mycobacterium smegmatis)).